We begin with the raw amino-acid sequence, 372 residues long: Alpha-parvin (372 aa).

Residues 1–11 (MATSPQKSPSV) are compositionally biased toward low complexity. The segment at 1–45 (MATSPQKSPSVPKSPTPKSPPSRKKDDSFLGKLGGTLARRKKAKE) is disordered. Ala-2 is subject to N-acetylalanine. Phosphoserine is present on residues Ser-8, Ser-14, and Ser-19. An interaction with ARHGAP31 region spans residues 21–25 (PSRKK). A phosphoserine mark is found at Ser-28 and Ser-62. Calponin-homology (CH) domains lie at 95-202 (QELM…QYFR) and 262-369 (NVVK…TKYR). The interval 223–372 (GILQSRQIQE…NLFTKYRNVE (150 aa)) is required for interaction with TESK1 and ILK.

This sequence belongs to the parvin family. Component of the heterotrimeric IPP (ILK-PINCH-PARVIN) complex composed of ILK, LIMS1/PINCH and PARVA; the complex binds to F-actin via the C-terminal tail of LIMS1 and the N-terminal region of PARVA, promoting F-actin filament bundling. Formation of the IPP complex is dependent on protein kinase C and precedes integrin-mediated cell adhesion and spreading. Interacts with TGFB1I1. Interacts with ARHGAP31. Interacts with the actin cytoskeleton. Interacts (via C-terminus) with TESK1 (via C-terminus); the interaction inhibits TESK1 kinase activity. Interacts with PXN/PAXILLIN (via LD motif 4). As to expression, widely expressed, with highest levels in heart, skeletal muscle, kidney and liver.

It localises to the cell junction. It is found in the focal adhesion. The protein resides in the cell membrane. The protein localises to the cytoplasm. Its subcellular location is the cytoskeleton. It localises to the myofibril. It is found in the sarcomere. The protein resides in the z line. Plays a role in sarcomere organization and in smooth muscle cell contraction. Required for normal development of the embryonic cardiovascular system, and for normal septation of the heart outflow tract. Plays a role in sprouting angiogenesis and is required for normal adhesion of vascular smooth muscle cells to endothelial cells during blood vessel development. Plays a role in the reorganization of the actin cytoskeleton, formation of lamellipodia and ciliogenesis. Plays a role in the establishment of cell polarity, cell adhesion, cell spreading, and directed cell migration. Within the IPP (ILK-PINCH-PARVIN) complex, binds to F-actin, promoting F-actin bundling, a process required to generate force for actin cytoskeleton reorganization and subsequent dynamic cell adhesion events such as cell spreading and migration. The protein is Alpha-parvin (PARVA) of Homo sapiens (Human).